Here is a 485-residue protein sequence, read N- to C-terminus: Protein DETOXIFICATION 14 (485 aa).

A run of 12 helical transmembrane segments spans residues 30-50, 68-88, 112-132, 147-167, 175-195, 207-227, 259-279, 288-308, 329-349, 372-392, 405-425, and 432-452; these read LSYI…LQVI, IAVS…ASAL, IVSL…IGDI, GKFA…QPLV, LILP…VLCW, GAAI…GLYM, ASMI…SGIL, VLSV…SLGA, AVYT…AIVF, MAPL…LSGV, VNLA…AFGF, and LWIG…LIVI.

Belongs to the multi antimicrobial extrusion (MATE) (TC 2.A.66.1) family.

The protein localises to the membrane. This chain is Protein DETOXIFICATION 14, found in Arabidopsis thaliana (Mouse-ear cress).